We begin with the raw amino-acid sequence, 416 residues long: Cotranscriptional regulator ARB2A homolog (416 aa).

The signal sequence occupies residues 1-23 (MHFYFNVLNLLTVWVMMAQLQQG). A disordered region spans residues 211-248 (AQVQLSSDSSDEPAEKRERKDKIQKETKKRRDFYEKYR). Basic and acidic residues predominate over residues 223–236 (PAEKRERKDKIQKE). S293 acts as the Nucleophile in catalysis. N-linked (GlcNAc...) asparagine glycosylation is present at N397.

Belongs to the ARB2A family.

Its subcellular location is the nucleus. It localises to the cytoplasm. In terms of biological role, may play role in the regulation of alternative splicing. May have hydrolase activity. This is Cotranscriptional regulator ARB2A homolog (ARB2A) from Gallus gallus (Chicken).